The chain runs to 146 residues: Inclusion membrane protein D (146 aa).

2 consecutive transmembrane segments (helical) span residues Ala-38–Phe-58 and Val-68–Gly-88.

The protein resides in the secreted. The protein localises to the host vacuole. It localises to the host pathogen-containing vacuole. Its subcellular location is the host pathogen-containing vacuole membrane. Host inclusion membrane protein probably involved in early modification events of the chlamydial inclusion. In Chlamydia trachomatis serovar L2 (strain ATCC VR-902B / DSM 19102 / 434/Bu), this protein is Inclusion membrane protein D.